We begin with the raw amino-acid sequence, 133 residues long: Interferon-induced transmembrane protein 3 (133 aa).

Over 1 to 57 (MNHTVQTFFSPVNSGQPPNYEMLKEEHEVAVLGAPHNPAPPTSTVIHIRSETSVPDH) the chain is Cytoplasmic. Phosphotyrosine is present on Tyr20. Lys24 participates in a covalent cross-link: Glycyl lysine isopeptide (Lys-Gly) (interchain with G-Cter in ubiquitin). The helical intramembrane region spans 58–78 (VVWSLFNTLFMNPCCLGFIAF). The tract at residues 60 to 93 (WSLFNTLFMNPCCLGFIAFAYSVKSRDRKMVGDV) is interaction with SPP1. Residues Cys71 and Cys72 are each lipidated (S-palmitoyl cysteine). The Cytoplasmic segment spans residues 79–107 (AYSVKSRDRKMVGDVTGAQAYASTAKCLN). Glycyl lysine isopeptide (Lys-Gly) (interchain with G-Cter in ubiquitin) cross-links involve residues Lys83, Lys88, and Lys104. Residue Cys105 is the site of S-palmitoyl cysteine attachment. Residues 108 to 128 (IWALILGILMTILLIVIPVLI) form a helical membrane-spanning segment. Residues 108 to 133 (IWALILGILMTILLIVIPVLIFQAYG) form an interaction with VAPA region. At 129-133 (FQAYG) the chain is on the extracellular side.

It belongs to the CD225/Dispanin family. As to quaternary structure, interacts with ATP6V0B. Interacts with CD81. Interacts with SPP1; the interaction reduces OPN expression. Interacts with VAPA. Interacts with BRI3 (isoforms 1 and 2); the interaction with isoform 2 is weaker than with isoform 1. In terms of processing, palmitoylation on membrane-proximal cysteines controls clustering in membrane compartments and antiviral activity against influenza virus and hepatitis C virus (HCV). Has no effect on anti-SARS-CoV-2 activity. Not glycosylated. Post-translationally, polyubiquitinated with both 'Lys-48' and 'Lys-63' linkages. Ubiquitination negatively regulates antiviral activity. Lys-24 is the most prevalent ubiquitination site. In terms of processing, phosphorylation at Tyr-20 is required for endosomal and lysosomal location.

It is found in the cell membrane. The protein localises to the late endosome membrane. The protein resides in the early endosome membrane. Its subcellular location is the lysosome membrane. It localises to the cytoplasm. It is found in the perinuclear region. Functionally, IFN-induced antiviral protein which disrupts intracellular cholesterol homeostasis. Inhibits the entry of viruses to the host cell cytoplasm by preventing viral fusion with cholesterol depleted endosomes. May inactivate new enveloped viruses which buds out of the infected cell, by letting them go out with a cholesterol depleted membrane. Active against multiple viruses, including influenza A virus, SARS coronaviruses (SARS-CoV and SARS-CoV-2), Marburg virus (MARV), Ebola virus (EBOV), Dengue virus (DNV), West Nile virus (WNV), human immunodeficiency virus type 1 (HIV-1), hepatitis C virus (HCV) and vesicular stomatitis virus (VSV). Can inhibit: influenza virus hemagglutinin protein-mediated viral entry, MARV and EBOV GP1,2-mediated viral entry, SARS-CoV and SARS-CoV-2 S protein-mediated viral entry and VSV G protein-mediated viral entry. Plays a critical role in the structural stability and function of vacuolar ATPase (v-ATPase). Establishes physical contact with the v-ATPase of endosomes which is critical for proper clathrin localization and is also required for the function of the v-ATPase to lower the pH in phagocytic endosomes thus establishing an antiviral state. In hepatocytes, IFITM proteins act in a coordinated manner to restrict HCV infection by targeting the endocytosed HCV virion for lysosomal degradation. IFITM2 and IFITM3 display anti-HCV activity that may complement the anti-HCV activity of IFITM1 by inhibiting the late stages of HCV entry, possibly in a coordinated manner by trapping the virion in the endosomal pathway and targeting it for degradation at the lysosome. Exerts opposing activities on SARS-CoV-2, including amphipathicity-dependent restriction of virus at endosomes and amphipathicity-independent enhancement of infection at the plasma membrane. The protein is Interferon-induced transmembrane protein 3 of Homo sapiens (Human).